The chain runs to 675 residues: Protein PALS1 (675 aa).

Disordered regions lie at residues 1 to 34 (MTTSHMNGHVTEESDSEVKNVDLASPEEHQKHRE) and 51 to 78 (RRSAQLERIRQQQEDMRRRREEEGKKQE). A required for the correct localization of PALS1 and PATJ at cell-cell contacts and the normal formation of tight junctions and adherens junctions region spans residues 1-345 (MTTSHMNGHV…QQIKPPPAKE (345 aa)). Basic and acidic residues-rich tracts occupy residues 10-34 (VTEESDSEVKNVDLASPEEHQKHRE) and 54-78 (AQLERIRQQQEDMRRRREEEGKKQE). Phosphoserine occurs at positions 14 and 25. The interval 21–140 (VDLASPEEHQ…LKHIQHTLID (120 aa)) is interaction with PARD6B. Ser83 and Ser84 each carry phosphoserine. 2 consecutive L27 domains span residues 120–177 (KILE…NKAS) and 179–235 (PFPL…MQLE). An interaction with LIN7C region spans residues 181–243 (PLISNAQDLA…LEPITDERVY (63 aa)). Residues 256 to 336 (IVRIEKARDI…TLTFVLIPSQ (81 aa)) enclose the PDZ domain. The region spanning 345–417 (ETVIHVKAHF…PGKSFQQQRE (73 aa)) is the SH3 domain. Residues 479–660 (KRPIILIGPQ…AYQELLRLIN (182 aa)) enclose the Guanylate kinase-like domain. ATP is bound at residue 486–493 (GPQNCGQN).

Belongs to the MAGUK family. In terms of assembly, heterodimer with MPP1. Forms a heterotrimeric complex composed of PALS1, LIN7B and PATJ; the N-terminal L27 domain of PALS1 interacts with the L27 domain of PATJ and the C-terminal L27 domain of PALS1 interacts with the L27 domain of LIN7B. Component of a complex composed of PALS1, CRB1 and MPP4. Component of a complex whose core is composed of ARHGAP17, AMOT, PALS1, PATJ and PARD3/PAR3. Component of a complex composed of PALS1, CRB1 and EPB41L5. Within the complex, interacts (via HOOK domain) with EPB41L5 (via FERM domain), and interacts with CRB1 (via intracellular domain). Component of a complex composed of PALS1, MPP3 and CRB1; PALS1 acts as a bridging protein between MPP3 (via guanylate kinase-like domain) and CRB1. Component of a complex composed of CRB3, PALS1 and PATJ. As part of the Crumbs complex; interacts with WWP1, the interaction is enhanced by AMOTL2 and facilitates WWP1 localization to the plasma membrane. The Crumbs complex promotes monoubiquitination of AMOTL2 by WWP1, which activates the Hippo signaling pathway. Interacts (via PDZ domain) with PATJ (via N-terminus). Interacts with EZR. Interacts (via PDZ domain) with CRB1 (via C-terminal ERLI motif). While the PDZ domain is sufficient for interaction with CRB1, the adjacent SH3 and guanylate kinase-like domains are likely to contribute to a high affinity interaction. Interacts with WWTR1/TAZ (via WW domain). Interacts with MPP7. Interacts (via PDZ domain) with CRB3 (via C-terminus). Interacts with LIN7C. Interacts with MPDZ. Interacts with PARD6B. Interacts with SC6A1. Interacts with CDH5; the interaction promotes PALS1 localization to cell junctions and is required for CDH5-mediated vascular lumen formation and endothelial cell. Interacts with NPHP1 (via coiled coil and SH3 domains). Interacts with NPHP4. Interacts with CRB2.

It is found in the golgi apparatus. Its subcellular location is the cell membrane. It localises to the endomembrane system. The protein localises to the cell junction. The protein resides in the tight junction. It is found in the adherens junction. Its subcellular location is the cell projection. It localises to the axon. The protein localises to the perikaryon. The protein resides in the apical cell membrane. Its function is as follows. Plays a role in tight junction biogenesis and in the establishment of cell polarity in epithelial cells. Also involved in adherens junction biogenesis by ensuring correct localization of the exocyst complex protein EXOC4/SEC8 which allows trafficking of adherens junction structural component CDH1 to the cell surface. Plays a role through its interaction with CDH5 in vascular lumen formation and endothelial membrane polarity. Required during embryonic and postnatal retinal development. Required for the maintenance of cerebellar progenitor cells in an undifferentiated proliferative state, preventing premature differentiation, and is required for cerebellar histogenesis, fissure formation, cerebellar layer organization and cortical development. Plays a role in neuronal progenitor cell survival, potentially via promotion of mTOR signaling. Plays a role in the radial and longitudinal extension of the myelin sheath in Schwann cells. May modulate SC6A1/GAT1-mediated GABA uptake by stabilizing the transporter. May play a role in the T-cell receptor-mediated activation of NF-kappa-B. Required for localization of EZR to the apical membrane of parietal cells and may play a role in the dynamic remodeling of the apical cytoskeleton. Required for the normal polarized localization of the vesicular marker STX4. Required for the correct trafficking of the myelin proteins PMP22 and MAG. Involved in promoting phosphorylation and cytoplasmic retention of transcriptional coactivators YAP1 and WWTR1/TAZ which leads to suppression of TGFB1-dependent transcription of target genes such as CCN2/CTGF, SERPINE1/PAI1, SNAI1/SNAIL1 and SMAD7. The polypeptide is Protein PALS1 (Pongo abelii (Sumatran orangutan)).